The chain runs to 158 residues: Transcription elongation factor GreB (158 aa).

This sequence belongs to the GreA/GreB family. GreB subfamily.

In terms of biological role, necessary for efficient RNA polymerase transcription elongation past template-encoded arresting sites. The arresting sites in DNA have the property of trapping a certain fraction of elongating RNA polymerases that pass through, resulting in locked ternary complexes. Cleavage of the nascent transcript by cleavage factors such as GreA or GreB allows the resumption of elongation from the new 3'terminus. GreB releases sequences of up to 9 nucleotides in length. The polypeptide is Transcription elongation factor GreB (Escherichia coli O157:H7).